The sequence spans 805 residues: ATP-dependent RNA helicase mak-5 (805 aa).

The segment covering 1 to 10 (MAVDKKRKNT) has biased composition (basic residues). 2 disordered regions span residues 1 to 33 (MAVD…KRPV) and 79 to 189 (VPKS…ELET). The span at 85–100 (EVEDDGEEFGGFDDEE) shows a compositional bias: acidic residues. Basic and acidic residues-rich tracts occupy residues 110-119 (QEVKTSETKA), 126-143 (AKEK…EQQK), and 164-189 (KNAE…ELET). The short motif at 209 to 237 (SEWVPLDLSPRMISSIAKLRFSKPTVIQS) is the Q motif element. The region spanning 240–463 (IPEIMAGHDV…AGKSKFKATS (224 aa)) is the Helicase ATP-binding domain. Residue 253 to 260 (ASTGSGKT) participates in ATP binding. A DEAD box motif is present at residues 372–375 (DEAD). Over residues 390 to 406 (FKALDRPPVEENNEDQK) the composition is skewed to basic and acidic residues. Positions 390–435 (FKALDRPPVEENNEDQKMGGTDEEGQEEEEEDSEEEEEEEEEHVNK) are disordered. The segment covering 410–431 (TDEEGQEEEEEDSEEEEEEEEE) has biased composition (acidic residues). In terms of domain architecture, Helicase C-terminal spans 510 to 666 (YLYATLMLQP…NSGNNTKKLV (157 aa)). The tract at residues 729–751 (AGKWGGKGSSKKQKQKEAQQMSK) is disordered.

This sequence belongs to the DEAD box helicase family. DDX24/MAK5 subfamily.

It localises to the nucleus. It is found in the nucleolus. It catalyses the reaction ATP + H2O = ADP + phosphate + H(+). Functionally, ATP-binding RNA helicase involved in the biogenesis of 60S ribosomal subunits and is required for the normal formation of 25S and 5.8S rRNAs. The sequence is that of ATP-dependent RNA helicase mak-5 (mak-5) from Neurospora crassa (strain ATCC 24698 / 74-OR23-1A / CBS 708.71 / DSM 1257 / FGSC 987).